We begin with the raw amino-acid sequence, 167 residues long: Lipoprotein signal peptidase (167 aa).

Transmembrane regions (helical) follow at residues 7-27 (LFLL…KYWV), 61-81 (FSHW…LWLW), and 87-107 (NKFL…GNLI). Residues Asp-117 and Asp-136 contribute to the active site. Residues 126–146 (IFYFAIFNLADSFITLGVIVI) traverse the membrane as a helical segment.

The protein belongs to the peptidase A8 family.

It is found in the cell inner membrane. The enzyme catalyses Release of signal peptides from bacterial membrane prolipoproteins. Hydrolyzes -Xaa-Yaa-Zaa-|-(S,diacylglyceryl)Cys-, in which Xaa is hydrophobic (preferably Leu), and Yaa (Ala or Ser) and Zaa (Gly or Ala) have small, neutral side chains.. It functions in the pathway protein modification; lipoprotein biosynthesis (signal peptide cleavage). Its function is as follows. This protein specifically catalyzes the removal of signal peptides from prolipoproteins. In Bartonella tribocorum (strain CIP 105476 / IBS 506), this protein is Lipoprotein signal peptidase.